The sequence spans 1769 residues: Gamma-tubulin complex component 6 (1769 aa).

3 disordered regions span residues 809 to 842 (EAQQ…HSCD), 859 to 881 (STPS…PFST), and 1284 to 1360 (TVCS…AEAR). Residues 820 to 831 (FPSTGSQVTSTG) are compositionally biased toward polar residues. A compositionally biased stretch (basic and acidic residues) spans 1314–1326 (PEEKGPGKSRDAE). Over residues 1332-1343 (LPSSSQEDTAVP) the composition is skewed to polar residues.

Belongs to the TUBGCP family. Component of the gamma-tubulin ring complex (gTuRC) consisting of TUBGCP2, TUBGCP3, TUBGCP4, TUBGCP5 and TUBGCP6 and gamma-tubulin TUBG1 or TUBG2. TUBGCP2, TUBGCP3, TUBGCP4, TUBGCP5 and TUBGCP6 assemble in a 5:5:2:1:1 stoichiometry; each is associated with a gamma-tubulin, thereby arranging 14 gamma-tubulins in a helical manner. Gamma-tubulin at the first position is blocked by TUBGCP3 at the last position, allowing 13 protafilaments to grow into a microtubule. The gTuRC (via TUBGCP3 and TUBGCP6) interacts with ACTB and MZT1; the interactions form a luminal bridge that stabilizes the initial structure during complex assembly. The gTuRC (via TUBGCP2) interacts with MZT2A/MZT2B and CDK5RAP2 (via CM1 motif); the interactions play a role in gTuRC activation.

Its subcellular location is the cytoplasm. The protein localises to the cytoskeleton. It localises to the microtubule organizing center. It is found in the centrosome. Its function is as follows. Component of the gamma-tubulin ring complex (gTuRC) which mediates microtubule nucleation. The gTuRC regulates the minus-end nucleation of alpha-beta tubulin heterodimers that grow into microtubule protafilaments, a critical step in centrosome duplication and spindle formation. The protein is Gamma-tubulin complex component 6 (Tubgcp6) of Mus musculus (Mouse).